Consider the following 305-residue polypeptide: Porphobilinogen deaminase (305 aa).

An S-(dipyrrolylmethanemethyl)cysteine modification is found at Cys-240.

It belongs to the HMBS family. Monomer. Requires dipyrromethane as cofactor.

It catalyses the reaction 4 porphobilinogen + H2O = hydroxymethylbilane + 4 NH4(+). It participates in porphyrin-containing compound metabolism; protoporphyrin-IX biosynthesis; coproporphyrinogen-III from 5-aminolevulinate: step 2/4. In terms of biological role, tetrapolymerization of the monopyrrole PBG into the hydroxymethylbilane pre-uroporphyrinogen in several discrete steps. In Xylella fastidiosa (strain M23), this protein is Porphobilinogen deaminase.